Reading from the N-terminus, the 973-residue chain is Putative cell agglutination protein pfl3 (973 aa).

The signal sequence occupies residues M1 to A24. N75, N96, N147, N171, N184, N218, and N253 each carry an N-linked (GlcNAc...) asparagine glycan. Repeat copies occupy residues G198–A232, G233–A267, G268–A302, G303–A337, G338–A372, G373–A407, G408–A442, G443–A477, G478–A512, G513–A547, G548–A582, G583–A617, G618–A652, G653–A687, G688–A722, G723–A757, G758–A792, and G793–L828. Residues G198–L828 form an 18 X 35 AA approximate tandem repeats region. N-linked (GlcNAc...) asparagine glycans are attached at residues N352 and N393. The DIPSY domain maps to T820–L973. N-linked (GlcNAc...) asparagine glycosylation is present at N848.

Belongs to the mam3/map4 family.

It localises to the cell surface. In terms of biological role, may be involved in agglutination during conjugation or other aspects of colony formation. Induces flocculation when overexpressed. This is Putative cell agglutination protein pfl3 from Schizosaccharomyces pombe (strain 972 / ATCC 24843) (Fission yeast).